The following is a 422-amino-acid chain: Receptor homology region, transmembrane domain- and RING domain-containing protein 3 (422 aa).

A signal peptide spans 1–22 (MNLVVLLILTLLLFIVSYVVDA). The Lumenal segment spans residues 23–168 (GQVILVDSNI…NTEDSVWSLY (146 aa)). A glycan (N-linked (GlcNAc...) asparagine) is linked at N31. An intrachain disulfide couples C64 to C89. The PA domain occupies 81 to 146 (LVLIIRGGCS…RAGEMLKKYA (66 aa)). The chain crosses the membrane as a helical span at residues 169–189 (ASIALILSLAIFCVMVTCVFF). The Cytoplasmic segment spans residues 190-422 (YRYCSTIRNS…HFASAHSLPD (233 aa)). The RING-type; atypical zinc finger occupies 232–274 (CAICLEDYIVGDKLRVLPCSHKFHVACVDSWLISWRTFCPVCK). The segment at 344 to 368 (LRRQASPLQSSSQRSHLSMKSSHSL) is disordered. Over residues 349 to 368 (SPLQSSSQRSHLSMKSSHSL) the composition is skewed to polar residues.

The protein localises to the prevacuolar compartment membrane. It localises to the protein storage vacuole membrane. Functionally, involved in the trafficking of vacuolar proteins. May function as a sorting receptor for protein trafficking to the protein storage vacuole (PSV). This chain is Receptor homology region, transmembrane domain- and RING domain-containing protein 3 (RMR3), found in Arabidopsis thaliana (Mouse-ear cress).